We begin with the raw amino-acid sequence, 184 residues long: dCTP deaminase (184 aa).

DCTP is bound by residues 107–112 (KSTYAR), 131–133 (TLE), glutamine 152, tyrosine 166, and glutamine 176. Glutamate 133 acts as the Proton donor/acceptor in catalysis.

The protein belongs to the dCTP deaminase family. In terms of assembly, homotrimer.

It carries out the reaction dCTP + H2O + H(+) = dUTP + NH4(+). It functions in the pathway pyrimidine metabolism; dUMP biosynthesis; dUMP from dCTP (dUTP route): step 1/2. In terms of biological role, catalyzes the deamination of dCTP to dUTP. This Rhodospirillum centenum (strain ATCC 51521 / SW) protein is dCTP deaminase.